The sequence spans 337 residues: MTKSNFVDYAKIHIRSGKGGKGSIHFRHEKYIPWGGSDGGNGGKGGDIILRGSRNYWTLLHLKHKYHIFADHGKAGEGKLRHGKDGQNKTIELPIGTAVFDGTTGKFITDIKYDKQEIVLLKGGRGGRGNNYFKSAVNQTPKHSQPGEPYEERQIVFQLKLLADVGLVGFPNTGKSTLLSIVSAAKPKIADYAFTTLEPNLGVVNVHNSYTFVMADIPGIVEGANEGKGLGLRFLRHIERNSLLLFMIPSDANDIANEYKILLNELACYNSELLNKQRILAISKSDMLDTKLEDVIKKELPTDIPHIFISSFTQKGITVLKDLLWEKLRFHDMKEIS.

The Obg domain occupies serine 4 to leucine 162. The OBG-type G domain maps to alanine 163–arginine 329. Residues glycine 169–serine 176, phenylalanine 194–glutamate 198, aspartate 216–glycine 219, serine 283–aspartate 286, and serine 310–phenylalanine 312 contribute to the GTP site. Residues serine 176 and threonine 196 each coordinate Mg(2+).

The protein belongs to the TRAFAC class OBG-HflX-like GTPase superfamily. OBG GTPase family. Monomer. The cofactor is Mg(2+).

It localises to the cytoplasm. An essential GTPase which binds GTP, GDP and possibly (p)ppGpp with moderate affinity, with high nucleotide exchange rates and a fairly low GTP hydrolysis rate. Plays a role in control of the cell cycle, stress response, ribosome biogenesis and in those bacteria that undergo differentiation, in morphogenesis control. This is GTPase Obg from Azobacteroides pseudotrichonymphae genomovar. CFP2.